Here is a 94-residue protein sequence, read N- to C-terminus: Large ribosomal subunit protein uL23 (94 aa).

This sequence belongs to the universal ribosomal protein uL23 family. Part of the 50S ribosomal subunit. Contacts protein L29, and trigger factor when it is bound to the ribosome.

One of the early assembly proteins it binds 23S rRNA. One of the proteins that surrounds the polypeptide exit tunnel on the outside of the ribosome. Forms the main docking site for trigger factor binding to the ribosome. This chain is Large ribosomal subunit protein uL23, found in Pelobacter propionicus (strain DSM 2379 / NBRC 103807 / OttBd1).